The following is a 60-amino-acid chain: Cytotoxin 3 (60 aa).

4 disulfide bridges follow: C3-C21, C14-C38, C42-C53, and C54-C59.

This sequence belongs to the three-finger toxin family. Short-chain subfamily. Type IA cytotoxin sub-subfamily. As to quaternary structure, monomer in solution; Homodimer and oligomer in the presence of negatively charged lipids forming a pore with a size ranging between 20 and 30 Angstroms. As to expression, expressed by the venom gland.

It is found in the secreted. It localises to the target cell membrane. Shows cytolytic activity on many different cells by forming pore in lipid membranes. In vivo, increases heart rate or kills the animal by cardiac arrest. In addition, it binds to heparin with high affinity, interacts with Kv channel-interacting protein 1 (KCNIP1) in a calcium-independent manner, and binds to integrin alpha-V/beta-3 (ITGAV/ITGB3) with moderate affinity. This Naja mossambica (Mozambique spitting cobra) protein is Cytotoxin 3.